Here is a 149-residue protein sequence, read N- to C-terminus: Nucleoside diphosphate kinase (149 aa).

Residues Lys-9, Phe-57, Arg-85, Thr-91, Arg-102, and Asn-112 each coordinate ATP. His-115 (pros-phosphohistidine intermediate) is an active-site residue.

It belongs to the NDK family. Homotetramer. It depends on Mg(2+) as a cofactor.

The protein resides in the cytoplasm. The enzyme catalyses a 2'-deoxyribonucleoside 5'-diphosphate + ATP = a 2'-deoxyribonucleoside 5'-triphosphate + ADP. It carries out the reaction a ribonucleoside 5'-diphosphate + ATP = a ribonucleoside 5'-triphosphate + ADP. Its function is as follows. Major role in the synthesis of nucleoside triphosphates other than ATP. The ATP gamma phosphate is transferred to the NDP beta phosphate via a ping-pong mechanism, using a phosphorylated active-site intermediate. The sequence is that of Nucleoside diphosphate kinase from Herpetosiphon aurantiacus (strain ATCC 23779 / DSM 785 / 114-95).